The chain runs to 296 residues: 4-hydroxybenzoate octaprenyltransferase (296 aa).

Helical transmembrane passes span isoleucine 28–isoleucine 48, leucine 51–isoleucine 71, leucine 102–leucine 122, phenylalanine 143–phenylalanine 163, alanine 174–methionine 194, phenylalanine 212–alanine 232, valine 233–leucine 253, and phenylalanine 274–phenylalanine 294.

It belongs to the UbiA prenyltransferase family. Mg(2+) serves as cofactor.

Its subcellular location is the cell inner membrane. It carries out the reaction all-trans-octaprenyl diphosphate + 4-hydroxybenzoate = 4-hydroxy-3-(all-trans-octaprenyl)benzoate + diphosphate. It participates in cofactor biosynthesis; ubiquinone biosynthesis. In terms of biological role, catalyzes the prenylation of para-hydroxybenzoate (PHB) with an all-trans polyprenyl group. Mediates the second step in the final reaction sequence of ubiquinone-8 (UQ-8) biosynthesis, which is the condensation of the polyisoprenoid side chain with PHB, generating the first membrane-bound Q intermediate 3-octaprenyl-4-hydroxybenzoate. This chain is 4-hydroxybenzoate octaprenyltransferase, found in Neisseria gonorrhoeae (strain NCCP11945).